Reading from the N-terminus, the 444-residue chain is MHGHNRNGQAHVPRRKRRNRFVKKNGQCNVYFANLSNKSQRYMADIFTTCVDTRWRYMLMLFSAAFLVSWLFFGLLFWCIAFFHGDLEASPSVPAAGAPGGNGGAAPAAPKPCIMHVNGFLGAFLFSVETQTTIGYGFRCVTEECPLAVIAVVVQSIVGCVIDSFMIGTIMAKMARPKKRAQTLLFSHHAVISVRDGKLCLMWRVGNLRKSHIVEAHVRAQLIKPYMTQEGEYLPLDQRDLNVGYDIGLDRIFLVSPIIIVHEIDEDSPLYGMGKEELESEDFEIVVILEGMVEATAMTTQARSSYLASEILWGHRFEPVVFEEKSHYKVDYSRFHKTYEVAGTPCCSARELQESKITVLPAPPPPRSAFCYENELALMSQEEEEMEEEAAAAAAVAAGLGLEAGPKEEAGIIRMLEFGSHLDLERMQGTLPLDNISYRRESAI.

Residues 1–55 (MHGHNRNGQAHVPRRKRRNRFVKKNGQCNVYFANLSNKSQRYMADIFTTCVDTRW) lie on the Cytoplasmic side of the membrane. The chain crosses the membrane as a helical span at residues 56–80 (RYMLMLFSAAFLVSWLFFGLLFWCI). The Extracellular portion of the chain corresponds to 81–119 (AFFHGDLEASPSVPAAGAPGGNGGAAPAAPKPCIMHVNG). Positions 120–131 (FLGAFLFSVETQ) form an intramembrane region, helical; Pore-forming. The pore-forming intramembrane region spans 132–138 (TTIGYGF). The Selectivity filter motif lies at 133–138 (TIGYGF). Over 139–147 (RCVTEECPL) the chain is Extracellular. A helical membrane pass occupies residues 148 to 169 (AVIAVVVQSIVGCVIDSFMIGT). The Cytoplasmic portion of the chain corresponds to 170-444 (IMAKMARPKK…NISYRRESAI (275 aa)). Residues 442–444 (SAI) carry the PDZ-binding motif.

Belongs to the inward rectifier-type potassium channel (TC 1.A.2.1) family. KCNJ4 subfamily. Homomultimeric and heteromultimeric association with KCNJ2 and KCNJ12. Interacts with DLG2 and DLG4. Associates, via its PDZ-recognition domain, with a complex containing LIN7A, LIN7B, LIN7C, DLG1, CASK and APBA1. Interacts with TAX1BP3. TAX1BP3 competes with LIN7 family members for KCNJ4 binding.

Its subcellular location is the cell membrane. It is found in the postsynaptic cell membrane. It localises to the cytoplasmic vesicle membrane. The enzyme catalyses K(+)(in) = K(+)(out). In terms of biological role, inward rectifier potassium channels are characterized by a greater tendency to allow potassium to flow into the cell rather than out of it. Their voltage dependence is regulated by the concentration of extracellular potassium; as external potassium is raised, the voltage range of the channel opening shifts to more positive voltages. The inward rectification is mainly due to the blockage of outward current by internal magnesium. Can be blocked by extracellular barium and cesium. The chain is Inward rectifier potassium channel 4 (KCNJ4) from Mesocricetus auratus (Golden hamster).